Reading from the N-terminus, the 506-residue chain is Maturase K (506 aa).

Belongs to the intron maturase 2 family. MatK subfamily.

The protein localises to the plastid. Its subcellular location is the chloroplast. Functionally, usually encoded in the trnK tRNA gene intron. Probably assists in splicing its own and other chloroplast group II introns. In Artanema fimbriatum, this protein is Maturase K.